A 193-amino-acid chain; its full sequence is Large ribosomal subunit protein bL25 (193 aa).

The protein belongs to the bacterial ribosomal protein bL25 family. CTC subfamily. Part of the 50S ribosomal subunit; part of the 5S rRNA/L5/L18/L25 subcomplex. Contacts the 5S rRNA. Binds to the 5S rRNA independently of L5 and L18.

In terms of biological role, this is one of the proteins that binds to the 5S RNA in the ribosome where it forms part of the central protuberance. In Lachnoclostridium phytofermentans (strain ATCC 700394 / DSM 18823 / ISDg) (Clostridium phytofermentans), this protein is Large ribosomal subunit protein bL25.